A 176-amino-acid polypeptide reads, in one-letter code: 2-C-methyl-D-erythritol 2,4-cyclodiphosphate synthase (176 aa).

The a divalent metal cation site is built by D23, H25, and H60. Residue 23–25 (DSH) coordinates 4-CDP-2-C-methyl-D-erythritol 2-phosphate. 149 to 152 (TSGE) provides a ligand contact to 4-CDP-2-C-methyl-D-erythritol 2-phosphate.

The protein belongs to the IspF family. Homotrimer. A divalent metal cation serves as cofactor.

It catalyses the reaction 4-CDP-2-C-methyl-D-erythritol 2-phosphate = 2-C-methyl-D-erythritol 2,4-cyclic diphosphate + CMP. The protein operates within isoprenoid biosynthesis; isopentenyl diphosphate biosynthesis via DXP pathway; isopentenyl diphosphate from 1-deoxy-D-xylulose 5-phosphate: step 4/6. Its function is as follows. Involved in the biosynthesis of isopentenyl diphosphate (IPP) and dimethylallyl diphosphate (DMAPP), two major building blocks of isoprenoid compounds. Catalyzes the conversion of 4-diphosphocytidyl-2-C-methyl-D-erythritol 2-phosphate (CDP-ME2P) to 2-C-methyl-D-erythritol 2,4-cyclodiphosphate (ME-CPP) with a corresponding release of cytidine 5-monophosphate (CMP). This is 2-C-methyl-D-erythritol 2,4-cyclodiphosphate synthase from Chlamydia abortus (strain DSM 27085 / S26/3) (Chlamydophila abortus).